Reading from the N-terminus, the 131-residue chain is D-ribose pyranase (131 aa).

H20 (proton donor) is an active-site residue. Substrate contacts are provided by residues D28, H98, and Y120–N122.

This sequence belongs to the RbsD / FucU family. RbsD subfamily. As to quaternary structure, homodecamer.

The protein resides in the cytoplasm. It catalyses the reaction beta-D-ribopyranose = beta-D-ribofuranose. The protein operates within carbohydrate metabolism; D-ribose degradation; D-ribose 5-phosphate from beta-D-ribopyranose: step 1/2. Its function is as follows. Catalyzes the interconversion of beta-pyran and beta-furan forms of D-ribose. This Limosilactobacillus fermentum (strain NBRC 3956 / LMG 18251) (Lactobacillus fermentum) protein is D-ribose pyranase.